A 311-amino-acid chain; its full sequence is tRNA-cytidine(32) 2-sulfurtransferase (311 aa).

Positions 47–52 match the PP-loop motif motif; the sequence is SGGKDS. Cysteine 122, cysteine 125, and cysteine 213 together coordinate [4Fe-4S] cluster.

This sequence belongs to the TtcA family. Homodimer. Mg(2+) is required as a cofactor. The cofactor is [4Fe-4S] cluster.

The protein localises to the cytoplasm. It carries out the reaction cytidine(32) in tRNA + S-sulfanyl-L-cysteinyl-[cysteine desulfurase] + AH2 + ATP = 2-thiocytidine(32) in tRNA + L-cysteinyl-[cysteine desulfurase] + A + AMP + diphosphate + H(+). It functions in the pathway tRNA modification. Functionally, catalyzes the ATP-dependent 2-thiolation of cytidine in position 32 of tRNA, to form 2-thiocytidine (s(2)C32). The sulfur atoms are provided by the cysteine/cysteine desulfurase (IscS) system. In Pectobacterium carotovorum subsp. carotovorum (strain PC1), this protein is tRNA-cytidine(32) 2-sulfurtransferase.